The following is a 137-amino-acid chain: Probable 4-amino-4-deoxy-L-arabinose-phosphoundecaprenol flippase subunit ArnF (137 aa).

Residues 1–5 lie on the Cytoplasmic side of the membrane; sequence MSRAR. The helical transmembrane segment at 6–26 threads the bilayer; the sequence is GFAFALGSVALVSGAQLGMRW. At 27–49 the chain is on the periplasmic side; sequence SMTRLPAPDQWLPALSAGSVDLA. The helical transmembrane segment at 50–70 threads the bilayer; the sequence is ALAVVAAAIAAYALSMLCWLL. The Cytoplasmic portion of the chain corresponds to 71–80; it reads ALRDLPLGRA. Residues 81 to 101 form a helical membrane-spanning segment; the sequence is YSLLSISYALVYLLAASLPLF. Position 102 (N102) is a topological domain, periplasmic. A helical membrane pass occupies residues 103–123; the sequence is EPFTLSKTLGVALVILGVITI. At 124 to 137 the chain is on the cytoplasmic side; it reads NSRSAPATSPRNTP.

It belongs to the ArnF family. Heterodimer of ArnE and ArnF.

The protein localises to the cell inner membrane. The protein operates within bacterial outer membrane biogenesis; lipopolysaccharide biosynthesis. Its function is as follows. Translocates 4-amino-4-deoxy-L-arabinose-phosphoundecaprenol (alpha-L-Ara4N-phosphoundecaprenol) from the cytoplasmic to the periplasmic side of the inner membrane. This Pseudomonas fluorescens (strain ATCC BAA-477 / NRRL B-23932 / Pf-5) protein is Probable 4-amino-4-deoxy-L-arabinose-phosphoundecaprenol flippase subunit ArnF.